We begin with the raw amino-acid sequence, 462 residues long: Trigger factor (462 aa).

The 86-residue stretch at 163–248 (GDEVLFDFKG…LKEVRRVNSL (86 aa)) folds into the PPIase FKBP-type domain. A disordered region spans residues 442–462 (SMQEKQTQEPAEEKVETKEEK). Residues 452-462 (AEEKVETKEEK) show a composition bias toward basic and acidic residues.

It belongs to the FKBP-type PPIase family. Tig subfamily.

Its subcellular location is the cytoplasm. It catalyses the reaction [protein]-peptidylproline (omega=180) = [protein]-peptidylproline (omega=0). Functionally, involved in protein export. Acts as a chaperone by maintaining the newly synthesized protein in an open conformation. Functions as a peptidyl-prolyl cis-trans isomerase. This is Trigger factor from Mycoplasmopsis synoviae (strain 53) (Mycoplasma synoviae).